The sequence spans 362 residues: Homeobox-leucine zipper protein HOX11 (362 aa).

The segment covering 27-45 has biased composition (basic and acidic residues); sequence REEAAEAGRRDHEVRRELE. The tract at residues 27–179 is disordered; the sequence is REEAAEAGRR…DDGGSARKKL (153 aa). Over residues 64-75 the composition is skewed to low complexity; it reads LTLLPMVPGLGL. Polar residues predominate over residues 126 to 135; it reads LSSSPNNSAG. Gly residues predominate over residues 145-160; the sequence is HGLGGNDAAPGGGGGD. The homeobox DNA-binding region spans 174-233; sequence SARKKLRLSKEQSAFLEESFKEHSTLNPKQKLALAKQLNLRPRQVEVWFQNRRARTKLKQ. The tract at residues 232–276 is leucine-zipper; the sequence is KQTEVDCEYLKRCCETLTEENRRLQKELAELRALKTVHPFYMHLP. Positions 301–330 are disordered; it reads AATSSTAAPPAAPSSGGIAATSSSAAAAAA.

Belongs to the HD-ZIP homeobox family. Class II subfamily. In terms of tissue distribution, expressed in stems, leaf sheaths and blades and panicles.

It is found in the nucleus. Its function is as follows. Probable transcription factor. This is Homeobox-leucine zipper protein HOX11 (HOX11) from Oryza sativa subsp. japonica (Rice).